Reading from the N-terminus, the 873-residue chain is MVASLSGAQIRQTFLDFYAAKGHKILPSASLVPEDPTVLLTIAGMLPFKPIFLGQREAEVPRATTSQKCIRTNDIENVGQTARHHTYFEMLGNFSFGDYFKEQAIAWAWELSTEVYKLPPERIVPSVFEEDDEAFAIWRDKIGIPEHRIQRMGAEDNFWASGPTGPCGPCSELYYDFYPEKGDDKIDLEDDTRFIEYYNLVFMEYNRDSDGKLAPLKNKNIDTGLGLERMAQILQGVPNNYETDLIFPIIETAAKIAGIKYKKSKAKTKTSLKVVGDHVRSVVQMIADGITASNVGRGYVLRRLIRRVVRHGQLIGIDGAFITQVAETAIASLEVAYPEVREREKIIKTELEREEAQFLKTLNRGEKLLGEIMAKKPKQISGKDAFDLYDTYGFPLELTQEIAAEQGLTVDEDGFAKAMKEQQDRGRSAHKTIDLTVQSALEQLAATVHPTDFLGYTDFSAKAKVAALLVKGETVDQASAGSEVQIALDQTPFYAESGGQIGDRGYLNGKDVVVRIEDVQKESDIFIHYGRIERGTLEVGDKLTAQIDLACRRQVQAHHTATHLLQAALKNIVDESIGQAGSLVAFDRLRFDFNYNQAVTPEQIQEIETQINTWIAEAHTTETEVMPIAEAKAKGAVAMFGEKYGAEVRVMDVPGVSMELCGGTHVKNTSEIGLFKIVTEAGVASGVRRIEAIAGPAVLEYLNVRDAVVRDLSDRFKAKPEELPERITTLQADLKTAQKQLDTLKAQLALVKSEQLLDQAEPAGEVKVLVSQLEGVDSESLKTAAGRLLQKLGEGAVVLGSVPAEGKVSLVAAFSPKVIEQGLQAGKFVGAIAKQCGGGGGGRPNLAQAGGRDPSKLADALDDAQKQLLAQLK.

4 residues coordinate Zn(2+): His559, His563, Cys661, and His665.

This sequence belongs to the class-II aminoacyl-tRNA synthetase family. Zn(2+) is required as a cofactor.

It localises to the cytoplasm. It catalyses the reaction tRNA(Ala) + L-alanine + ATP = L-alanyl-tRNA(Ala) + AMP + diphosphate. In terms of biological role, catalyzes the attachment of alanine to tRNA(Ala) in a two-step reaction: alanine is first activated by ATP to form Ala-AMP and then transferred to the acceptor end of tRNA(Ala). Also edits incorrectly charged Ser-tRNA(Ala) and Gly-tRNA(Ala) via its editing domain. The polypeptide is Alanine--tRNA ligase (Acaryochloris marina (strain MBIC 11017)).